A 107-amino-acid polypeptide reads, in one-letter code: Essential MCU regulator, mitochondrial (107 aa).

The transit peptide at 1–47 directs the protein to the mitochondrion; it reads MASGAARWLALVRVGSGASRSWLSLRKGGDVSAGRSCSGQSLVPTRS. Residues 48–65 lie on the Mitochondrial matrix side of the membrane; that stretch reads VIVTRSGAILPKPVKMSF. A helical membrane pass occupies residues 66–85; sequence GLLRVFSIVIPFLYVGTLIS. Positions 81-85 match the GXXXX[G/A/S] motif; it reads GTLIS. Topologically, residues 86–107 are mitochondrial intermembrane; that stretch reads KNFAALLEEHDIFVPEDDDDDD.

This sequence belongs to the SMDT1/EMRE family. Component of the uniplex complex, composed of MCU, EMRE/SMDT1, MICU1 and MICU2 (or MICU3) in a 4:4:1:1 stoichiometry. The number of EMRE/SMDT1 molecules is hovewer variable, ranging from 1 to 4 copies per uniplex complex, leading to uniplex complexes with distinct gatekeeping profiles. Interacts (via its C-terminal poly-Asp tail) with MCUR1; the interaction is direct. Unprocessed form interacts (via transit peptide) with MAIP1. Post-translationally, undergoes proteolytic degradation in neurons: degraded by AFG3L2 and SPG7 before SMDT1/EMRE assembly with the uniporter complex, limiting the availability of SMDT1/EMRE for MCU assembly and promoting efficient assembly of gatekeeper subunits with MCU.

It localises to the mitochondrion inner membrane. In terms of biological role, essential regulatory subunit of the mitochondrial calcium uniporter complex (uniplex), a complex that mediates calcium uptake into mitochondria. Required to bridge the calcium-sensing proteins MICU1 with the calcium-conducting subunit MCU. Acts by mediating activation of MCU and retention of MICU1 to the MCU pore, in order to ensure tight regulation of the uniplex complex and appropriate responses to intracellular calcium signaling. This chain is Essential MCU regulator, mitochondrial, found in Bos taurus (Bovine).